Reading from the N-terminus, the 206-residue chain is Large ribosomal subunit protein bL9 (206 aa).

The interval 182 to 206 (FAENQQKALAKEMNDNDANSINEEA) is disordered. The span at 197-206 (NDANSINEEA) shows a compositional bias: polar residues.

This sequence belongs to the bacterial ribosomal protein bL9 family.

In terms of biological role, binds to the 23S rRNA. The protein is Large ribosomal subunit protein bL9 of Bartonella henselae (strain ATCC 49882 / DSM 28221 / CCUG 30454 / Houston 1) (Rochalimaea henselae).